Consider the following 187-residue polypeptide: dITP/XTP pyrophosphatase (187 aa).

7 to 12 (TGNKHK) contributes to the substrate binding site. Mg(2+) is bound by residues glutamate 36 and aspartate 64. Aspartate 64 acts as the Proton acceptor in catalysis. Residues alanine 65, 140–143 (FAFD), lysine 163, and 168–169 (HR) each bind substrate.

This sequence belongs to the HAM1 NTPase family. As to quaternary structure, homodimer. Mg(2+) is required as a cofactor.

The catalysed reaction is XTP + H2O = XMP + diphosphate + H(+). It catalyses the reaction dITP + H2O = dIMP + diphosphate + H(+). The enzyme catalyses ITP + H2O = IMP + diphosphate + H(+). Pyrophosphatase that catalyzes the hydrolysis of nucleoside triphosphates to their monophosphate derivatives, with a high preference for the non-canonical purine nucleotides XTP (xanthosine triphosphate), dITP (deoxyinosine triphosphate) and ITP. Seems to function as a house-cleaning enzyme that removes non-canonical purine nucleotides from the nucleotide pool, thus preventing their incorporation into DNA/RNA and avoiding chromosomal lesions. In Methanothermobacter marburgensis (strain ATCC BAA-927 / DSM 2133 / JCM 14651 / NBRC 100331 / OCM 82 / Marburg) (Methanobacterium thermoautotrophicum), this protein is dITP/XTP pyrophosphatase.